The sequence spans 474 residues: Siroheme synthase (474 aa).

Residues 1–202 (MEYLPIFIDL…GRPKEANKVL (202 aa)) form a precorrin-2 dehydrogenase /sirohydrochlorin ferrochelatase region. Residues 22-23 (AV) and 41-42 (PA) each bind NAD(+). Ser-126 carries the post-translational modification Phosphoserine. The interval 218–474 (GHVTLVGAGP…YLINSIINLI (257 aa)) is uroporphyrinogen-III C-methyltransferase. Pro-227 lines the S-adenosyl-L-methionine pocket. The active-site Proton acceptor is the Asp-250. The Proton donor role is filled by Lys-272. S-adenosyl-L-methionine is bound by residues 303 to 305 (GGD), Ile-308, 333 to 334 (TA), Met-385, and Gly-414.

The protein in the N-terminal section; belongs to the precorrin-2 dehydrogenase / sirohydrochlorin ferrochelatase family. In the C-terminal section; belongs to the precorrin methyltransferase family.

The catalysed reaction is uroporphyrinogen III + 2 S-adenosyl-L-methionine = precorrin-2 + 2 S-adenosyl-L-homocysteine + H(+). It carries out the reaction precorrin-2 + NAD(+) = sirohydrochlorin + NADH + 2 H(+). The enzyme catalyses siroheme + 2 H(+) = sirohydrochlorin + Fe(2+). The protein operates within cofactor biosynthesis; adenosylcobalamin biosynthesis; precorrin-2 from uroporphyrinogen III: step 1/1. Its pathway is cofactor biosynthesis; adenosylcobalamin biosynthesis; sirohydrochlorin from precorrin-2: step 1/1. It participates in porphyrin-containing compound metabolism; siroheme biosynthesis; precorrin-2 from uroporphyrinogen III: step 1/1. It functions in the pathway porphyrin-containing compound metabolism; siroheme biosynthesis; siroheme from sirohydrochlorin: step 1/1. The protein operates within porphyrin-containing compound metabolism; siroheme biosynthesis; sirohydrochlorin from precorrin-2: step 1/1. Functionally, multifunctional enzyme that catalyzes the SAM-dependent methylations of uroporphyrinogen III at position C-2 and C-7 to form precorrin-2 via precorrin-1. Then it catalyzes the NAD-dependent ring dehydrogenation of precorrin-2 to yield sirohydrochlorin. Finally, it catalyzes the ferrochelation of sirohydrochlorin to yield siroheme. This Blochmanniella pennsylvanica (strain BPEN) protein is Siroheme synthase.